The chain runs to 33 residues: Photosystem II reaction center protein Psb30 (33 aa).

A helical membrane pass occupies residues 5 to 25 (VIAQLIALALIVGSGPLVIAL).

It belongs to the Psb30/Ycf12 family. PSII is composed of 1 copy each of membrane proteins PsbA, PsbB, PsbC, PsbD, PsbE, PsbF, PsbH, PsbI, PsbJ, PsbK, PsbL, PsbM, PsbT, PsbX, PsbY, PsbZ, Psb30/Ycf12, peripheral proteins of the oxygen-evolving complex and a large number of cofactors. It forms dimeric complexes.

The protein resides in the plastid. The protein localises to the chloroplast thylakoid membrane. Its function is as follows. A core subunit of photosystem II (PSII), probably helps stabilize the reaction center. This Physcomitrium patens (Spreading-leaved earth moss) protein is Photosystem II reaction center protein Psb30.